The chain runs to 181 residues: Regulator of G-protein signaling 5 (181 aa).

The RGS domain maps to Ser-64–Ile-180.

The protein localises to the cytoplasm. Its subcellular location is the membrane. Inhibits signal transduction by increasing the GTPase activity of G protein alpha subunits thereby driving them into their inactive GDP-bound form. Binds to G(i)-alpha and G(o)-alpha, but not to G(s)-alpha. The sequence is that of Regulator of G-protein signaling 5 (Rgs5) from Rattus norvegicus (Rat).